A 357-amino-acid chain; its full sequence is 3-dehydroquinate synthase (357 aa).

NAD(+) contacts are provided by residues 126 to 127 (TT), Lys-139, and Lys-148. Zn(2+) contacts are provided by Glu-181, His-244, and His-261.

Belongs to the sugar phosphate cyclases superfamily. Dehydroquinate synthase family. The cofactor is Co(2+). Zn(2+) is required as a cofactor. It depends on NAD(+) as a cofactor.

The protein resides in the cytoplasm. The catalysed reaction is 7-phospho-2-dehydro-3-deoxy-D-arabino-heptonate = 3-dehydroquinate + phosphate. It participates in metabolic intermediate biosynthesis; chorismate biosynthesis; chorismate from D-erythrose 4-phosphate and phosphoenolpyruvate: step 2/7. In terms of biological role, catalyzes the conversion of 3-deoxy-D-arabino-heptulosonate 7-phosphate (DAHP) to dehydroquinate (DHQ). The protein is 3-dehydroquinate synthase of Solibacter usitatus (strain Ellin6076).